We begin with the raw amino-acid sequence, 24 residues long: Pandinin-2 (24 aa).

Homooligomer. Expressed by the venom gland.

Its subcellular location is the secreted. The protein localises to the target cell membrane. Its function is as follows. Disrupts cell membranes through formation of pores. Has strong antimicrobial activity against Gram-positive bacteria B.subtilis, S.epidermidis, E.faecalis and S.aureus. Is less active against Gram-negative bacteria P.aeruginosa and E.coli. Also increases efficacy of antibiotics (ampicillin, chloramphenicol, streptomycin, kanamycin, novobiocin) when tested against E.coli, probably by facilitating their incorporation into the bacteria. Possesses antifungal activity against C.albicans and hemolytic activity against human, sheep and pig erythrocytes. The chain is Pandinin-2 from Pandinus imperator (Emperor scorpion).